The primary structure comprises 430 residues: Lipoyl synthase, mitochondrial (430 aa).

A mitochondrion-targeting transit peptide spans 1–37; that stretch reads MATSAGKLRTLYSAHSSLSSLPPSARPTLQLATLRSY. Residues 39–55 show a composition bias toward polar residues; the sequence is TTTPHDSPIGNTSNTPP. Residues 39–59 form a disordered region; sequence TTTPHDSPIGNTSNTPPTVKR. C141, C146, C152, C172, C176, C179, and S387 together coordinate [4Fe-4S] cluster. In terms of domain architecture, Radical SAM core spans 155–376; that stretch reads GSSKSAATAT…KERALEMGFL (222 aa).

This sequence belongs to the radical SAM superfamily. Lipoyl synthase family. [4Fe-4S] cluster is required as a cofactor.

It localises to the mitochondrion. It carries out the reaction [[Fe-S] cluster scaffold protein carrying a second [4Fe-4S](2+) cluster] + N(6)-octanoyl-L-lysyl-[protein] + 2 oxidized [2Fe-2S]-[ferredoxin] + 2 S-adenosyl-L-methionine + 4 H(+) = [[Fe-S] cluster scaffold protein] + N(6)-[(R)-dihydrolipoyl]-L-lysyl-[protein] + 4 Fe(3+) + 2 hydrogen sulfide + 2 5'-deoxyadenosine + 2 L-methionine + 2 reduced [2Fe-2S]-[ferredoxin]. It functions in the pathway protein modification; protein lipoylation via endogenous pathway; protein N(6)-(lipoyl)lysine from octanoyl-[acyl-carrier-protein]: step 2/2. Catalyzes the radical-mediated insertion of two sulfur atoms into the C-6 and C-8 positions of the octanoyl moiety bound to the lipoyl domains of lipoate-dependent enzymes, thereby converting the octanoylated domains into lipoylated derivatives. This chain is Lipoyl synthase, mitochondrial, found in Ajellomyces capsulatus (strain H143) (Darling's disease fungus).